We begin with the raw amino-acid sequence, 101 residues long: Chaperone modulatory protein CbpM (101 aa).

Belongs to the CbpM family.

In terms of biological role, interacts with CbpA and inhibits both the DnaJ-like co-chaperone activity and the DNA binding activity of CbpA. Together with CbpA, modulates the activity of the DnaK chaperone system. Does not inhibit the co-chaperone activity of DnaJ. This Salmonella arizonae (strain ATCC BAA-731 / CDC346-86 / RSK2980) protein is Chaperone modulatory protein CbpM.